Consider the following 237-residue polypeptide: Phosphoribosylaminoimidazole-succinocarboxamide synthase (237 aa).

Belongs to the SAICAR synthetase family.

The catalysed reaction is 5-amino-1-(5-phospho-D-ribosyl)imidazole-4-carboxylate + L-aspartate + ATP = (2S)-2-[5-amino-1-(5-phospho-beta-D-ribosyl)imidazole-4-carboxamido]succinate + ADP + phosphate + 2 H(+). Its pathway is purine metabolism; IMP biosynthesis via de novo pathway; 5-amino-1-(5-phospho-D-ribosyl)imidazole-4-carboxamide from 5-amino-1-(5-phospho-D-ribosyl)imidazole-4-carboxylate: step 1/2. This is Phosphoribosylaminoimidazole-succinocarboxamide synthase from Campylobacter fetus subsp. fetus (strain 82-40).